We begin with the raw amino-acid sequence, 288 residues long: Protoheme IX farnesyltransferase (288 aa).

9 consecutive transmembrane segments (helical) span residues 16–36, 37–57, 88–108, 111–131, 138–158, 162–182, 210–230, 236–256, and 265–285; these read VWSLLVFVGVIGAIVAINRFT, LTNILLILIATVSITLGSMGA, VKGLYFGLILMFLSIIILLFF, YLAAVFMAIGLFDNVFIYSYL, WNIILGGFSGGFPVVIGWYTV, FSVLPWFLFALVVIWIPIHVW, AICISSSAVILFIFSIIPVFF, TYMIVATIIAIPMLVYSVLFV, and LKLFIYSSPYLAIIFVLVLIF.

The protein belongs to the UbiA prenyltransferase family. Protoheme IX farnesyltransferase subfamily.

The protein localises to the cell membrane. It carries out the reaction heme b + (2E,6E)-farnesyl diphosphate + H2O = Fe(II)-heme o + diphosphate. The protein operates within porphyrin-containing compound metabolism; heme O biosynthesis; heme O from protoheme: step 1/1. Its function is as follows. Converts heme B (protoheme IX) to heme O by substitution of the vinyl group on carbon 2 of heme B porphyrin ring with a hydroxyethyl farnesyl side group. This Thermoplasma volcanium (strain ATCC 51530 / DSM 4299 / JCM 9571 / NBRC 15438 / GSS1) protein is Protoheme IX farnesyltransferase.